Here is an 874-residue protein sequence, read N- to C-terminus: Cap-specific mRNA (nucleoside-2'-O-)-methyltransferase 1A (874 aa).

Over residues Met1 to Thr10 the composition is skewed to basic and acidic residues. The interval Met1 to Ala64 is disordered. Residues Gln60–Ala106 form the G-patch domain. Positions Phe211–Arg440 constitute a RrmJ-type SAM-dependent 2'-O-MTase domain. Positions 273 and 354 each coordinate S-adenosyl-L-methionine. The active-site Proton acceptor is the Lys394. The interval Pro535–Leu555 is disordered.

It carries out the reaction a 5'-end (N(7)-methyl 5'-triphosphoguanosine)-ribonucleoside in mRNA + S-adenosyl-L-methionine = a 5'-end (N(7)-methyl 5'-triphosphoguanosine)-(2'-O-methyl-ribonucleoside) in mRNA + S-adenosyl-L-homocysteine + H(+). S-adenosyl-L-methionine-dependent methyltransferase that mediates mRNA cap1 2'-O-ribose methylation to the 5'-cap structure of mRNAs. Methylates the ribose of the first nucleotide of a m(7)GpppG-capped mRNA to produce m(7)GpppNmp (cap1). Cap1 modification is linked to higher levels of translation. This chain is Cap-specific mRNA (nucleoside-2'-O-)-methyltransferase 1A, found in Caenorhabditis briggsae.